Here is a 142-residue protein sequence, read N- to C-terminus: Glycine-rich RNA-binding protein 1 (142 aa).

The 65-residue stretch at 1–65 (NSLHSAFSTY…RNITVNEAQS (65 aa)) folds into the RRM domain. Positions 48–101 (MNGKELDGRNITVNEAQSRGGRGGGGGGGYGGGRGGGGGYGRRDGGGGGYGGGG) are disordered. Residues 67 to 101 (GGRGGGGGGGYGGGRGGGGGYGRRDGGGGGYGGGG) are compositionally biased toward gly residues.

Functionally, possibly has a role in RNA transcription or processing during stress. This chain is Glycine-rich RNA-binding protein 1 (GRP1), found in Sorghum bicolor (Sorghum).